An 823-amino-acid polypeptide reads, in one-letter code: Adhesion G protein-coupled receptor E2 (823 aa).

The first 23 residues, 1 to 23 (MGGRVFLVFLAFCVWLTLPGAET), serve as a signal peptide directing secretion. The Extracellular portion of the chain corresponds to 24–540 (QDSRGCARWC…EEDPVLTVIT (517 aa)). The EGF-like 1 domain occupies 25–66 (DSRGCARWCPQDSSCVNATACRCNPGFSSFSEIITTPMETCD). Intrachain disulfides connect Cys29/Cys39, Cys33/Cys45, Cys47/Cys65, Cys71/Cys85, Cys79/Cys94, Cys96/Cys117, Cys123/Cys136, Cys130/Cys145, Cys147/Cys161, Cys167/Cys180, Cys174/Cys189, Cys191/Cys210, Cys216/Cys229, Cys223/Cys238, and Cys240/Cys259. N-linked (GlcNAc...) asparagine glycosylation is present at Asn41. Residues 67-118 (DINECATLSKVSCGKFSDCWNTEGSYDCVCSPGYEPVSGAKTFKNESENTCQ) enclose the EGF-like 2; calcium-binding domain. The N-linked (GlcNAc...) asparagine glycan is linked to Asn111. The 44-residue stretch at 119 to 162 (DVDECQQNPRLCKSYGTCVNTLGSYTCQCLPGFKLKPEDPKLCT) folds into the EGF-like 3; calcium-binding domain. The region spanning 163–211 (DVNECTSGQNPCHSSTHCLNNVGSYQCRCRPGWQPIPGSPNGPNNTVCE) is the EGF-like 4; calcium-binding domain. Asn206 carries N-linked (GlcNAc...) asparagine glycosylation. The EGF-like 5; calcium-binding domain occupies 212–260 (DVDECSSGQHQCDSSTVCFNTVGSYSCRCRPGWKPRHGIPNNQKDTVCE). Residues Asn298, Asn347, Asn354, Asn456, and Asn460 are each glycosylated (N-linked (GlcNAc...) asparagine). The 177-residue stretch at 354-530 (NFSYPAGTEL…AVLMAHYDVQ (177 aa)) folds into the GAIN-B domain. Intrachain disulfides connect Cys482–Cys512 and Cys500–Cys514. Residues 482–530 (CVFWEHGQNGCGHWATTGCSTIGTRDTSTICRCTHLSSFAVLMAHYDVQ) form a GPS region. Residues 541 to 561 (YMGLSVSLLCLLLAALTFLLC) traverse the membrane as a helical segment. Residues 562-569 (KAIQNTST) lie on the Cytoplasmic side of the membrane. A helical transmembrane segment spans residues 570 to 590 (SLHLQLSLCLFLAHLLFLVAI). Residues 591–605 (DQTGHKVLCSIIAGT) are Extracellular-facing. Residues 606–626 (LHYLYLATLTWMLLEALYLFL) form a helical membrane-spanning segment. The Cytoplasmic segment spans residues 627-644 (TARNLTVVNYSSINRFMK). A helical membrane pass occupies residues 645 to 665 (KLMFPVGYGVPAVTVAISAAS). The Extracellular segment spans residues 666 to 683 (RPHLYGTPSRCWLQPEKG). Residues 684–704 (FIWGFLGPVCAIFSVNLVLFL) traverse the membrane as a helical segment. At 705–735 (VTLWILKNRLSSLNSEVSTLRNTRMLAFKAT) the chain is on the cytoplasmic side. Residues 736 to 756 (AQLFILGCTWCLGILQVGPAA) traverse the membrane as a helical segment. The Extracellular segment spans residues 757-760 (RVMA). Residues 761-781 (YLFTIINSLQGVFIFLVYCLL) form a helical membrane-spanning segment. The Cytoplasmic segment spans residues 782 to 823 (SQQVREQYGKWSKGIRKLKTESEMHTLSSSAKADTSKPSTVN).

This sequence belongs to the G-protein coupled receptor 2 family. Adhesion G-protein coupled receptor (ADGR) subfamily. Forms a heterodimer, consisting of a large extracellular region non-covalently linked to a seven-transmembrane moiety. Interacts with chondroitin sulfate; the interaction with chondroitin sulfate is calcium-dependent. Interacts with CD55. Autoproteolytically cleaved into 2 subunits, an extracellular alpha subunit and a seven-transmembrane beta subunit. Expression is restricted to myeloid cells. Highest expression was found in peripheral blood leukocytes, followed by spleen and lymph nodes, with intermediate to low levels in thymus, bone marrow, fetal liver, placenta, and lung, and no expression in heart, brain, skeletal muscle, kidney, or pancreas. Expression is also detected in monocyte/macrophage and Jurkat cell lines but not in other cell lines tested. High expression in mast cells.

The protein localises to the cell membrane. It is found in the cell projection. Its subcellular location is the ruffle membrane. Cell surface receptor that binds to the chondroitin sulfate moiety of glycosaminoglycan chains and promotes cell attachment. Promotes granulocyte chemotaxis, degranulation and adhesion. In macrophages, promotes the release of inflammatory cytokines, including IL8 and TNF. Signals probably through G-proteins. Is a regulator of mast cell degranulation. This Homo sapiens (Human) protein is Adhesion G protein-coupled receptor E2.